Consider the following 99-residue polypeptide: MLIDFCCSYIAGTHGRERAPSFTGTFVSHVSGENNCRPRRSEITQPCASGTEKKHFAATEKPCTNSLEGSRKDFLSLPLGHSYLFLFCFWRMICSEPKL.

The helical transmembrane segment at 74–90 threads the bilayer; sequence FLSLPLGHSYLFLFCFW.

It localises to the membrane. This is an uncharacterized protein from Saccharomyces cerevisiae (strain ATCC 204508 / S288c) (Baker's yeast).